The sequence spans 468 residues: Cytochrome bd ubiquinol oxidase subunit 1 (468 aa).

Transmembrane regions (helical) follow at residues 15 to 35, 51 to 71, 95 to 115, 124 to 144, 177 to 197, 219 to 239, 331 to 351, 366 to 386, and 416 to 436; these read TLFH…VALM, AKFW…TGIL, LAIE…LWIF, IHAL…FWIL, LWVE…FFIA, LAMI…HMQA, FRIM…GLWL, IMIA…IMTE, and SIIA…FLFI. Position 18 (histidine 18) interacts with heme b. Position 183 (histidine 183) interacts with heme b. Methionine 334 is a heme b binding site. The segment at 448-468 is disordered; the sequence is HHDVPVSTDPFSQEVYHGISS.

It belongs to the cytochrome ubiquinol oxidase subunit 1 family. As to quaternary structure, heterodimer of subunits I and II. Requires heme b as cofactor. Heme d cis-diol is required as a cofactor.

The protein resides in the cell membrane. It carries out the reaction 2 a ubiquinol + O2(in) + 4 H(+)(in) = 2 a ubiquinone + 2 H2O(in) + 4 H(+)(out). In Bacillus subtilis (strain 168), this protein is Cytochrome bd ubiquinol oxidase subunit 1 (cydA).